We begin with the raw amino-acid sequence, 296 residues long: uncharacterized protein (296 aa).

Positions 1-95 constitute an FAD-binding FR-type domain; it reads MYKIVSKKEL…VGPLGVPSEF (95 aa).

This is an uncharacterized protein from Clostridium beijerinckii (Clostridium MP).